A 101-amino-acid chain; its full sequence is Small ribosomal subunit protein bS16 (101 aa).

It belongs to the bacterial ribosomal protein bS16 family.

The sequence is that of Small ribosomal subunit protein bS16 from Ureaplasma urealyticum serovar 10 (strain ATCC 33699 / Western).